A 346-amino-acid polypeptide reads, in one-letter code: Selenide, water dikinase (346 aa).

C15 is an active-site residue. Residues K18 and 46–48 (SKD) each bind ATP. D49 contacts Mg(2+). Residues D66, D89, and 137–139 (GHS) each bind ATP. D89 contacts Mg(2+). Mg(2+) is bound at residue D225.

The protein belongs to the selenophosphate synthase 1 family. Class I subfamily. In terms of assembly, homodimer. Requires Mg(2+) as cofactor.

It carries out the reaction hydrogenselenide + ATP + H2O = selenophosphate + AMP + phosphate + 2 H(+). Its function is as follows. Synthesizes selenophosphate from selenide and ATP. The polypeptide is Selenide, water dikinase (Photobacterium profundum (strain SS9)).